A 491-amino-acid polypeptide reads, in one-letter code: Probable glycine dehydrogenase (decarboxylating) subunit 2 (491 aa).

The residue at position 273 (Lys273) is an N6-(pyridoxal phosphate)lysine.

It belongs to the GcvP family. C-terminal subunit subfamily. In terms of assembly, the glycine cleavage system is composed of four proteins: P, T, L and H. In this organism, the P 'protein' is a heterodimer of two subunits. The cofactor is pyridoxal 5'-phosphate.

It catalyses the reaction N(6)-[(R)-lipoyl]-L-lysyl-[glycine-cleavage complex H protein] + glycine + H(+) = N(6)-[(R)-S(8)-aminomethyldihydrolipoyl]-L-lysyl-[glycine-cleavage complex H protein] + CO2. Functionally, the glycine cleavage system catalyzes the degradation of glycine. The P protein binds the alpha-amino group of glycine through its pyridoxal phosphate cofactor; CO(2) is released and the remaining methylamine moiety is then transferred to the lipoamide cofactor of the H protein. This is Probable glycine dehydrogenase (decarboxylating) subunit 2 from Bacillus velezensis (strain DSM 23117 / BGSC 10A6 / LMG 26770 / FZB42) (Bacillus amyloliquefaciens subsp. plantarum).